A 52-amino-acid polypeptide reads, in one-letter code: Troponin C, skeletal muscle (52 aa).

EF-hand domains follow at residues 2-37 and 38-52; these read KSEE…SGEH and VTDE…DGDK. Residues Asp15, Asn17, Asp19, Tyr21, and Glu26 each contribute to the Ca(2+) site.

Belongs to the troponin C family.

Its function is as follows. Troponin is the central regulatory protein of striated muscle contraction. Tn consists of three components: Tn-I which is the inhibitor of actomyosin ATPase, Tn-T which contains the binding site for tropomyosin and Tn-C. The binding of calcium to Tn-C abolishes the inhibitory action of Tn on actin filaments. This Protopterus dolloi (Slender lungfish) protein is Troponin C, skeletal muscle.